A 313-amino-acid polypeptide reads, in one-letter code: Competence protein ComGA (313 aa).

138-145 (GPVGSGKT) lines the ATP pocket.

Belongs to the GSP E family.

The protein localises to the cell membrane. Required for uptake of DNA by competent cells. May be involved in assembly of a complex forming a transformation pilus at the surface of competent cells. This chain is Competence protein ComGA, found in Streptococcus pneumoniae (strain ATCC BAA-255 / R6).